The primary structure comprises 561 residues: CWF19-like protein mug161 (561 aa).

The disordered stretch occupies residues 286–338; that stretch reads QQTNKFHKSKSSTALFKSKKDSSSSLNKMHKSESHSALNNLHKSESGTSLNNR. A Phosphoserine modification is found at S296. At T298 the chain carries Phosphothreonine. S317, S319, S331, and S334 each carry phosphoserine. Positions 320–337 are enriched in polar residues; the sequence is HSALNNLHKSESGTSLNN.

Belongs to the CWF19 family.

It localises to the nucleus. Its function is as follows. Has a role in meiosis. The chain is CWF19-like protein mug161 (mug161) from Schizosaccharomyces pombe (strain 972 / ATCC 24843) (Fission yeast).